The chain runs to 423 residues: Gamma-glutamyl phosphate reductase (423 aa).

It belongs to the gamma-glutamyl phosphate reductase family.

It is found in the cytoplasm. It catalyses the reaction L-glutamate 5-semialdehyde + phosphate + NADP(+) = L-glutamyl 5-phosphate + NADPH + H(+). Its pathway is amino-acid biosynthesis; L-proline biosynthesis; L-glutamate 5-semialdehyde from L-glutamate: step 2/2. Catalyzes the NADPH-dependent reduction of L-glutamate 5-phosphate into L-glutamate 5-semialdehyde and phosphate. The product spontaneously undergoes cyclization to form 1-pyrroline-5-carboxylate. The chain is Gamma-glutamyl phosphate reductase from Paraburkholderia phymatum (strain DSM 17167 / CIP 108236 / LMG 21445 / STM815) (Burkholderia phymatum).